We begin with the raw amino-acid sequence, 157 residues long: DNA gyrase inhibitor (157 aa).

This sequence belongs to the DNA gyrase inhibitor family. In terms of assembly, interacts with DNA gyrase.

The protein localises to the cytoplasm. Functionally, inhibits the supercoiling activity of DNA gyrase. Acts by inhibiting DNA gyrase at an early step, prior to (or at the step of) binding of DNA by the gyrase. It protects cells against toxins that target DNA gyrase, by inhibiting activity of these toxins and reducing the formation of lethal double-strand breaks in the cell. This Shigella boydii serotype 18 (strain CDC 3083-94 / BS512) protein is DNA gyrase inhibitor.